Consider the following 791-residue polypeptide: MDNLDPNSSLQVEKLRNRKSRAVWQNNNTTTHNNPYANLSTGEKSRSRHNTGSSYVSPYGGGNGEENAYTGNNNKSNTSGNLLQVPGAGGGGDLNSNKKQSRRMSIHVSARQHGRSFSQTGPIDMANLPALPKIGGVTTSGVGGAGGDVMTRTGGLTIEQKIFKELSQGSAAEVDDYYKTLLKQKNLITRDIKDNINQNQKNILQLTKDLKETQEELIELRGTTKELYEVLGYFKESAQRRLELEFEPETQKELHSPQKSNQLGIPSNKKKDRSSIMVLKKMWDSQLQSLFKHVDGASKFVQPLPNRHIVAESGRWFEVNVGNWKPSYPTHLFIFNDLILIAVKKSSSSSQEPTTGGSNGGSKSRLQAVQCWPLTQVSLQQIKSPKKDDDKMYFINLKSKSLSYVYSTDRYDHFVKVTEAFNKGRNEMIQSERLLDSRLSSPSNNNGDSKEEKRQLRESLRNSGNYKEGVTDDAGGAATGGGRKSAGTPNRNSTDYVLHDISARVHSRNRSQDLGNNFKLANNGKSQFFNEIKTLEDRLDDVDVEISHNQYAEAVELISIIESKLRNIENALTNQRNGGKNVNIADELLLLDVSKLKIKNRKENVSNGLIFDLQHNIAKLKQDDIDNILTLFDNLEQLDRGVQGYLDSMSAYLSTTVSKLIVGLQGSTKIDVVNYLSNLMVINVSIVKRTIQTYEQIIAPILKRHGDVDSSGLINWCIDEFTKLCKQIKKHLYGTLLISSGINMETDEPIYKVKERKLYDNFLKIMQPQLEELKSVGLNVDYIFESILNLE.

The disordered stretch occupies residues 16 to 101; that stretch reads RNRKSRAVWQ…GDLNSNKKQS (86 aa). A compositionally biased stretch (polar residues) spans 23-42; that stretch reads VWQNNNTTTHNNPYANLSTG. Positions 70-83 are enriched in low complexity; that stretch reads TGNNNKSNTSGNLL. Residues 190–229 adopt a coiled-coil conformation; the sequence is RDIKDNINQNQKNILQLTKDLKETQEELIELRGTTKELYE. Residue Lys-193 forms a Glycyl lysine isopeptide (Lys-Gly) (interchain with G-Cter in ubiquitin) linkage. Residues 247 to 256 are compositionally biased toward basic and acidic residues; that stretch reads EPETQKELHS. Disordered regions lie at residues 247-271 and 432-495; these read EPETQKELHSPQKSNQLGIPSNKKK and ERLL…NSTD. Positions 438 to 447 are enriched in polar residues; it reads RLSSPSNNNG. The span at 448–460 shows a compositional bias: basic and acidic residues; it reads DSKEEKRQLRESL. A coiled-coil region spans residues 521 to 577; the sequence is ANNGKSQFFNEIKTLEDRLDDVDVEISHNQYAEAVELISIIESKLRNIENALTNQRN.

It belongs to the EXO84 family. Component of the exocyst complex.

The protein resides in the cytoplasmic vesicle. It localises to the secretory vesicle. Its function is as follows. Involved in the secretory pathway as part of the exocyst complex which tethers secretory vesicles to the sites of exocytosis. Plays a role in both the assembly of the exocyst and the polarization of this complex to specific sites of the plasma membrane for exocytosis. Also involved in assembly of the spliceosome. The sequence is that of Exocyst complex component EXO84 (EXO84) from Candida albicans (strain SC5314 / ATCC MYA-2876) (Yeast).